We begin with the raw amino-acid sequence, 48 residues long: DNA-directed RNA polymerase subunit Rpo12 (48 aa).

Residues C9, C26, and C29 each contribute to the Zn(2+) site.

It belongs to the archaeal Rpo12/eukaryotic RPC10 RNA polymerase subunit family. Part of the RNA polymerase complex. Zn(2+) serves as cofactor.

Its subcellular location is the cytoplasm. It carries out the reaction RNA(n) + a ribonucleoside 5'-triphosphate = RNA(n+1) + diphosphate. In terms of biological role, DNA-dependent RNA polymerase (RNAP) catalyzes the transcription of DNA into RNA using the four ribonucleoside triphosphates as substrates. In Saccharolobus islandicus (strain Y.N.15.51 / Yellowstone #2) (Sulfolobus islandicus), this protein is DNA-directed RNA polymerase subunit Rpo12.